The sequence spans 878 residues: Phosphoenolpyruvate carboxylase (878 aa).

Catalysis depends on residues histidine 137 and lysine 545.

Belongs to the PEPCase type 1 family. Mg(2+) serves as cofactor.

It catalyses the reaction oxaloacetate + phosphate = phosphoenolpyruvate + hydrogencarbonate. In terms of biological role, forms oxaloacetate, a four-carbon dicarboxylic acid source for the tricarboxylic acid cycle. This Serratia proteamaculans (strain 568) protein is Phosphoenolpyruvate carboxylase.